The primary structure comprises 465 residues: L-cystine uptake protein TcyP (465 aa).

A run of 10 helical transmembrane segments spans residues Leu-3–Met-23, Val-34–Pro-54, Tyr-73–Phe-93, Ile-105–Ile-125, Pro-184–Val-204, Ala-224–Thr-246, Phe-263–Ala-283, Leu-338–Ala-358, Phe-370–Gly-390, and Phe-394–Ile-414.

It belongs to the dicarboxylate/amino acid:cation symporter (DAACS) (TC 2.A.23) family.

It is found in the membrane. Functionally, mediates uptake of L-cystine, the oxidized form of L-cysteine. The polypeptide is L-cystine uptake protein TcyP (Shouchella clausii (strain KSM-K16) (Alkalihalobacillus clausii)).